A 113-amino-acid polypeptide reads, in one-letter code: Protein INCREASED RESISTANCE TO MYZUS PERSICAE 1 (113 aa).

An FLZ-type zinc finger spans residues 56-100 (DFLKTCSLCNRSLCHHRDIYMYRGNNAFCSLECREKQIKLDEKKA).

Belongs to the FLZ family. Interacts with KIN10 and KIN11 via its FLZ-type zinc finger domain. Interacts with KINB3 via its N-terminal part. Interacts with GEBP.

The protein localises to the nucleus. Its subcellular location is the cytoplasm. Functionally, may act as an adapter to facilitate the interaction of SnRK1 complex with effector proteins, conferring tissue- and stimulus-type specific differences in the SnRK1 regulation pathway. This chain is Protein INCREASED RESISTANCE TO MYZUS PERSICAE 1, found in Arabidopsis thaliana (Mouse-ear cress).